Reading from the N-terminus, the 104-residue chain is uncharacterized protein (104 aa).

This is an uncharacterized protein from Galliformes (FAdV-1).